The sequence spans 490 residues: Cis-aconitate decarboxylase (490 aa).

Belongs to the PrpD family. As to quaternary structure, homodimer.

The protein localises to the mitochondrion. The enzyme catalyses cis-aconitate + H(+) = itaconate + CO2. Its function is as follows. Involved in the production of itaconic acid, a soluble unsaturated dicarboxylic acid mainly produced from sugars. In Aspergillus terreus (strain NIH 2624 / FGSC A1156), this protein is Cis-aconitate decarboxylase (cad1).